Here is a 561-residue protein sequence, read N- to C-terminus: Potassium-transporting ATPase potassium-binding subunit (561 aa).

Helical transmembrane passes span 5 to 25 (LAAGLQIAFVLAVLAIAYVPV), 60 to 80 (YGYAASVLGFSLASALFLYFL), 86 to 106 (VLPLSDGLSGVSPAVAFNTAI), 130 to 150 (VGLAVQNFVSAAVGMAVAIAL), 177 to 197 (ILLPFSFVIALILLSQGVIQS), 247 to 267 (PTPLSNIVEILAILLIPVCLT), 281 to 301 (LTLLAVMGILWSGLLAVTLAA), 324 to 344 (FGIPGSALFAVATTGTSTGAV), 376 to 396 (GLYGILVLALIAVFVGGLLVG), 415 to 435 (ALSILVMPALVLIGTAITVIL), 491 to 511 (ICMLLGRFLPIIFVLALAGAL), and 533 to 553 (GLLTGTVVLVAALTFFPALAL).

Belongs to the KdpA family. The system is composed of three essential subunits: KdpA, KdpB and KdpC.

It localises to the cell membrane. Part of the high-affinity ATP-driven potassium transport (or Kdp) system, which catalyzes the hydrolysis of ATP coupled with the electrogenic transport of potassium into the cytoplasm. This subunit binds the extracellular potassium ions and delivers the ions to the membrane domain of KdpB through an intramembrane tunnel. In Rhodococcus erythropolis (strain PR4 / NBRC 100887), this protein is Potassium-transporting ATPase potassium-binding subunit.